A 466-amino-acid chain; its full sequence is ATP synthase subunit beta (466 aa).

Residue 153–160 (GGAGVGKT) participates in ATP binding.

It belongs to the ATPase alpha/beta chains family. F-type ATPases have 2 components, CF(1) - the catalytic core - and CF(0) - the membrane proton channel. CF(1) has five subunits: alpha(3), beta(3), gamma(1), delta(1), epsilon(1). CF(0) has three main subunits: a(1), b(2) and c(9-12). The alpha and beta chains form an alternating ring which encloses part of the gamma chain. CF(1) is attached to CF(0) by a central stalk formed by the gamma and epsilon chains, while a peripheral stalk is formed by the delta and b chains.

The protein resides in the cell membrane. It catalyses the reaction ATP + H2O + 4 H(+)(in) = ADP + phosphate + 5 H(+)(out). Produces ATP from ADP in the presence of a proton gradient across the membrane. The catalytic sites are hosted primarily by the beta subunits. The chain is ATP synthase subunit beta from Oenococcus oeni (strain ATCC BAA-331 / PSU-1).